Consider the following 1335-residue polypeptide: Probable serine/threonine-protein kinase ndrC (1335 aa).

Disordered regions lie at residues Met1–Ser70, Val85–Ser158, Leu276–Asn447, and Thr462–Lys603. Polar residues predominate over residues Asn8 to Glu17. Low complexity predominate over residues Ser27–Ser41. Basic residues predominate over residues Arg55–Ser70. The span at Ser89–Ser117 shows a compositional bias: low complexity. Over residues Thr118–Met132 the composition is skewed to polar residues. A compositionally biased stretch (low complexity) spans Asn133–Ser153. Residues Leu276 to Gln288 are compositionally biased toward pro residues. Low complexity-rich tracts occupy residues Ser289 to Ser331, Asn345 to Lys368, Ser382 to Ser396, Pro412 to Ser424, Pro437 to Asn447, and Thr462 to Ser484. A compositionally biased stretch (polar residues) spans Asn485–Leu497. Positions Ser498–Asn507 are enriched in low complexity. Residues Gly508–Glu528 are compositionally biased toward polar residues. The span at Ser540–Gly566 shows a compositional bias: low complexity. Positions Lys567–Leu581 are enriched in basic and acidic residues. Residues Asn586–Asn602 are compositionally biased toward low complexity. Positions Asn586 to Lys613 form a coiled coil. A Protein kinase domain is found at Phe718–Phe1019. Residues Ile724–Val732 and Lys747 each bind ATP. The Proton acceptor role is filled by Asp840. The region spanning Lys1020–Met1106 is the AGC-kinase C-terminal domain. Residues Ser1239–Leu1284 show a composition bias toward low complexity. The tract at residues Ser1239–Ile1313 is disordered. Residues Pro1287–Ile1313 are compositionally biased toward basic and acidic residues. A coiled-coil region spans residues Lys1289 to Ile1325.

It belongs to the protein kinase superfamily. AGC Ser/Thr protein kinase family.

It catalyses the reaction L-seryl-[protein] + ATP = O-phospho-L-seryl-[protein] + ADP + H(+). The catalysed reaction is L-threonyl-[protein] + ATP = O-phospho-L-threonyl-[protein] + ADP + H(+). This is Probable serine/threonine-protein kinase ndrC (ndrC) from Dictyostelium discoideum (Social amoeba).